A 284-amino-acid chain; its full sequence is 4-diphosphocytidyl-2-C-methyl-D-erythritol kinase (284 aa).

Lys-14 is a catalytic residue. 98 to 108 (PMGGGIGGGSS) is a binding site for ATP. Asp-140 is an active-site residue.

It belongs to the GHMP kinase family. IspE subfamily.

The catalysed reaction is 4-CDP-2-C-methyl-D-erythritol + ATP = 4-CDP-2-C-methyl-D-erythritol 2-phosphate + ADP + H(+). It participates in isoprenoid biosynthesis; isopentenyl diphosphate biosynthesis via DXP pathway; isopentenyl diphosphate from 1-deoxy-D-xylulose 5-phosphate: step 3/6. Catalyzes the phosphorylation of the position 2 hydroxy group of 4-diphosphocytidyl-2C-methyl-D-erythritol. This is 4-diphosphocytidyl-2-C-methyl-D-erythritol kinase from Shewanella loihica (strain ATCC BAA-1088 / PV-4).